The following is a 198-amino-acid chain: Recombination protein RecR (198 aa).

The C4-type zinc finger occupies 58-73 (CLNCGNVGTSDICDIC). In terms of domain architecture, Toprim spans 81–175 (GELCVVEDVA…RLTSLAQGVP (95 aa)).

Belongs to the RecR family.

Functionally, may play a role in DNA repair. It seems to be involved in an RecBC-independent recombinational process of DNA repair. It may act with RecF and RecO. The sequence is that of Recombination protein RecR from Ruegeria pomeroyi (strain ATCC 700808 / DSM 15171 / DSS-3) (Silicibacter pomeroyi).